The sequence spans 305 residues: MQSLPFDLVTGLGFGAFLLLLLALPLAFWAVSSQARTGIVQLLVALANLLLTSQLVLRWWESGHFPISNLYESLCFLAWACTLTQLLVERSWPSPIVAAAATPMGLGCIAFASFALPDQLQSAAPLVPALRSSWLVMHVSVIMVSYAALLVGSLLSLAVLLTDRGEALELRSSSIGSGGFRQSMRVGSDGVLQLQSIRLSTGEQLDSLSYRTITVGFLMLTVGIVSGAVWANEAWGSYWSWDPKETWALICWLVYAAYLHTRLSRGWQGRRPALVAVVGLVVIAVCYIGVNLLGIGLHSYGWFLG.

Transmembrane regions (helical) follow at residues 11-31 (GLGFGAFLLLLLALPLAFWAV), 37-57 (TGIVQLLVALANLLLTSQLVL), 63-83 (GHFPISNLYESLCFLAWACTL), 96-116 (IVAAAATPMGLGCIAFASFAL), 141-161 (VIMVSYAALLVGSLLSLAVLL), 212-232 (TITVGFLMLTVGIVSGAVWAN), 246-263 (TWALICWLVYAAYLHTRL), and 275-295 (VAVVGLVVIAVCYIGVNLLGI).

This sequence belongs to the CcmF/CycK/Ccl1/NrfE/CcsA family. As to quaternary structure, may interact with ccs1.

The protein localises to the cellular thylakoid membrane. Its function is as follows. Required during biogenesis of c-type cytochromes (cytochrome c6 and cytochrome f) at the step of heme attachment. The polypeptide is Cytochrome c biogenesis protein CcsA (Parasynechococcus marenigrum (strain WH8102)).